Consider the following 664-residue polypeptide: Transmembrane protein 201 (664 aa).

Met-1 is subject to N-acetylmethionine. Residues 1-214 lie on the Nuclear side of the membrane; that stretch reads MEGVSALLAS…SSSAVKAPFQ (214 aa). The helical transmembrane segment at 215–235 threads the bilayer; the sequence is VILLRALAFLACAFLLFTTLY. Residues 236–297 are Perinuclear space-facing; sequence GPSEPFTPGA…EAWAFGQSHQ (62 aa). A compositionally biased stretch (low complexity) spans 245-261; sequence AALPPALPPGGNSSAAS. The tract at residues 245–264 is disordered; it reads AALPPALPPGGNSSAASDNT. A helical membrane pass occupies residues 298–318; that stretch reads TSIVAVGLLTCLLAMLLAGRI. Residues 319–322 are Nuclear-facing; it reads RLRR. A helical membrane pass occupies residues 323–343; the sequence is IDAFSTCLWALLLGLHLAEHY. Residues 344-356 lie on the Perinuclear space side of the membrane; sequence LQAASPGWLDTLK. Residues 357–374 traverse the membrane as a helical segment; the sequence is FSTTSLCCLVGFTAAVAT. Residues 375-642 lie on the Nuclear side of the membrane; it reads RKSTGPRRFR…ARVSPSLVRG (268 aa). Phosphoserine is present on residues Ser-441, Ser-444, Ser-450, Ser-454, Ser-466, Ser-477, and Ser-480. Residues 502-522 are disordered; the sequence is PLPSPAPSVASSVASSSGSLR. Residues 508-520 are compositionally biased toward low complexity; the sequence is PSVASSVASSSGS. A Phosphoserine modification is found at Ser-529. Positions 544–629 are disordered; that stretch reads SSPGEAPNTP…TTKGCSEETT (86 aa). 2 stretches are compositionally biased toward basic and acidic residues: residues 578–587 and 595–608; these read HTRDTKHTME and DSAR…KEDE. Over residues 610-628 the composition is skewed to polar residues; the sequence is SQSSTCVVDTTTKGCSEET. The chain crosses the membrane as a helical span at residues 643–663; it reads LLAVSLAVNALFTSAYLYQSL. A topological domain (perinuclear space) is located at residue Arg-664.

Belongs to the TMEM201 family. As to quaternary structure, isoform 2 interacts with EMD. Isoform 3 interacts with SUN2 and LMNA. May bind to Ran GTPase; has a greater affinity for Ran-GTP over Ran-GDP.

The protein localises to the nucleus inner membrane. Its function is as follows. Critical regulator of angiogenesis and endothelial cell (EC) migration. Promotes the migration of endothelial cells, which is essential for angiogenesis. Interacts with the linker of nucleoskeleton and cytoskeleton (LINC) complex, which plays a vital role in connecting the cell's cytoskeleton to the nuclear envelope. This interaction is essential for maintaining cellular structure and facilitating the movement of endothelial cells, which is critical for proper vascular development. Involved in nuclear movement during fibroblast polarization and migration. May recruit Ran GTPase to the nuclear periphery. May define a distinct membrane domain in the vicinity of the mitotic spindle. Involved in the organization of the nuclear envelope implicating EMD, SUN1 and A-type lamina. In terms of biological role, proposed to be involved in actin-dependent nuclear movement; via SUN2 associates with transmembrane actin-associated nuclear (TAN) lines which are bound to F-actin cables and couple the nucleus to retrograde actin flow. The sequence is that of Transmembrane protein 201 (Tmem201) from Mus musculus (Mouse).